We begin with the raw amino-acid sequence, 415 residues long: Serine hydroxymethyltransferase 3 (415 aa).

(6S)-5,6,7,8-tetrahydrofolate-binding positions include Leu122 and 126–128; that span reads GHL. At Lys230 the chain carries N6-(pyridoxal phosphate)lysine.

This sequence belongs to the SHMT family. As to quaternary structure, homodimer. Pyridoxal 5'-phosphate is required as a cofactor.

It localises to the cytoplasm. It catalyses the reaction (6R)-5,10-methylene-5,6,7,8-tetrahydrofolate + glycine + H2O = (6S)-5,6,7,8-tetrahydrofolate + L-serine. It functions in the pathway one-carbon metabolism; tetrahydrofolate interconversion. It participates in amino-acid biosynthesis; glycine biosynthesis; glycine from L-serine: step 1/1. In terms of biological role, catalyzes the reversible interconversion of serine and glycine with tetrahydrofolate (THF) serving as the one-carbon carrier. This reaction serves as the major source of one-carbon groups required for the biosynthesis of purines, thymidylate, methionine, and other important biomolecules. Also exhibits THF-independent aldolase activity toward beta-hydroxyamino acids, producing glycine and aldehydes, via a retro-aldol mechanism. This chain is Serine hydroxymethyltransferase 3, found in Burkholderia lata (strain ATCC 17760 / DSM 23089 / LMG 22485 / NCIMB 9086 / R18194 / 383).